Consider the following 359-residue polypeptide: Cyclic AMP response element-binding protein B (359 aa).

2 disordered regions span residues 1–73 (MDNS…AQGG) and 185–238 (VRNK…FTEI). Residues 9–32 (NGNSSAASGSNDVVDVVAQQAAAA) show a composition bias toward low complexity. Residues 33-47 (VGGGGGGGGGGGGGN) are compositionally biased toward gly residues. A compositionally biased stretch (low complexity) spans 48–70 (PQQQQQNPQSTTAGGPTGATNNA). A KID domain is found at 198-257 (KPEPNTQHPEDSDESLSDDDSQHHRSELTRRPSYNKIFTEISGPDMSGASLPMSDGVLNS). A phosphoserine mark is found at Ser-209, Ser-212, and Ser-214. Residues 217 to 227 (DSQHHRSELTR) are compositionally biased toward basic and acidic residues. The bZIP domain occupies 300–359 (TRKREIRLQKNREAARECRRKKKEYIKCLENRVAVLENQNKALIEELKSLKELYCQTKND). A basic motif region spans residues 301–326 (RKREIRLQKNREAARECRRKKKEYIK). Positions 328–349 (LENRVAVLENQNKALIEELKSL) are leucine-zipper.

This sequence belongs to the bZIP family. ATF subfamily. Homodimer. Most cells of the adult brain; cell bodies, but not neuropil.

Its subcellular location is the nucleus. Its function is as follows. Isoform E is a PKA-dependent transcriptional activator. Isoform J is a direct antagonist of activation by isoform E in cell culture. Binds the cAMP response element (CRE) (consensus: 5'-GTGACGT[AC][AG]-3'), a sequence present in many viral and cellular promoters. Has a role in long-term memory. This Drosophila melanogaster (Fruit fly) protein is Cyclic AMP response element-binding protein B.